A 323-amino-acid chain; its full sequence is Olfactory receptor 52B2 (323 aa).

Residues 1 to 27 are Extracellular-facing; it reads MSHTNVTIFHPAVFVLPGIPGLEAYHI. Asn-5 carries an N-linked (GlcNAc...) asparagine glycan. The chain crosses the membrane as a helical span at residues 28–48; the sequence is WLSIPLCLIYITAVLGNSILI. The Cytoplasmic segment spans residues 49–56; it reads VVIVMERN. The chain crosses the membrane as a helical span at residues 57 to 77; it reads LHVPMYFFLSMLAVMDILLST. Residues 78 to 101 lie on the Extracellular side of the membrane; the sequence is TTVPKALAIFWLQAHNIAFDACVT. Cys-99 and Cys-191 form a disulfide bridge. Residues 102-122 form a helical membrane-spanning segment; sequence QGFFVHMMFVGESAILLAMAF. The Cytoplasmic segment spans residues 123-141; the sequence is DRFVAICAPLRYTTVLTWP. The helical transmembrane segment at 142-162 threads the bilayer; that stretch reads VVGRIALAVITRSFCIIFPVI. The Extracellular segment spans residues 163 to 198; the sequence is FLLKRLPFCLTNIVPHSYCEHIGVARLACADITVNI. Residues 199–219 traverse the membrane as a helical segment; it reads WYGFSVPIVMVILDVILIAVS. Residues 220-239 lie on the Cytoplasmic side of the membrane; the sequence is YSLILRAVFRLPSQDARHKA. The chain crosses the membrane as a helical span at residues 240–260; it reads LSTCGSHLCVILMFYVPSFFT. Residues 261–275 lie on the Extracellular side of the membrane; that stretch reads LLTHHFGRNIPQHVH. The helical transmembrane segment at 276–296 threads the bilayer; that stretch reads ILLANLYVAVPPMLNPIVYGV. The Cytoplasmic segment spans residues 297–323; it reads KTKQIREGVAHRFFDIKTWCCTSPLGS.

The protein belongs to the G-protein coupled receptor 1 family.

It localises to the cell membrane. Functionally, odorant receptor. This is Olfactory receptor 52B2 (OR52B2) from Homo sapiens (Human).